The following is a 145-amino-acid chain: MKQQKDASKPAHFFHQVIVIALVLFVSKIIESFMPIPMPGSVIGLVLLFVLLCTGAVKLGEVEKVGTTLTNNIGLLFVPAGISVVNSLGVISQAPFLIIGLIIVSTILLLICTGYVTQIIMKVTSRSKGDKVTKKIKIEEAQAHD.

A run of 4 helical transmembrane segments spans residues 13–30, 40–62, 69–91, and 95–117; these read FFHQ…SKII, GSVI…LGEV, LTNN…LGVI, and PFLI…GYVT.

It belongs to the CidA/LrgA family. LrgA subfamily.

Its subcellular location is the cell membrane. In terms of biological role, inhibits the expression or activity of extracellular murein hydrolases by interacting, possibly with LrgB, with the holin-like proteins CidA and/or CidB. The LrgAB and CidAB proteins may affect the proton motive force of the membrane. May be involved in programmed cell death (PCD), possibly triggering PCD in response to antibiotics and environmental stresses. The polypeptide is Antiholin-like protein LrgA (Staphylococcus aureus (strain MW2)).